Consider the following 440-residue polypeptide: Phosphoglycerate kinase, glycosomal (440 aa).

Positions 23, 24, 25, 26, 39, 61, 62, 64, 65, 135, 171, and 172 each coordinate (2R)-3-phosphoglycerate. Gly217 provides a ligand contact to CDP. Ala218 lines the ADP pocket. Residues Ala218 and Lys219 each contribute to the AMP site. Ala218 provides a ligand contact to ATP. Mg(2+) is bound at residue Ala218. Lys219 provides a ligand contact to (2R)-3-phosphoglycerate. Asp222 is a binding site for CDP. Asp222 contacts Mg(2+). 2 residues coordinate ADP: Lys223 and Gly241. Lys223 lines the AMP pocket. Gly241 lines the CDP pocket. AMP is bound by residues Ala242 and Ala314. ATP contacts are provided by Ala242 and Ala314. Residues Ala314 and Asn338 each coordinate ADP. CDP-binding residues include Gly339 and Phe344. Residues Phe344, Glu345, Asp377, and Ser378 each contribute to the ADP site. Glu345 is a binding site for AMP. ATP contacts are provided by Asp377 and Ser378. Position 377 (Asp377) interacts with Mg(2+).

It belongs to the phosphoglycerate kinase family. As to quaternary structure, monomer. Mg(2+) is required as a cofactor.

Its subcellular location is the glycosome. The enzyme catalyses (2R)-3-phosphoglycerate + ATP = (2R)-3-phospho-glyceroyl phosphate + ADP. The protein operates within carbohydrate degradation; glycolysis; pyruvate from D-glyceraldehyde 3-phosphate: step 2/5. This chain is Phosphoglycerate kinase, glycosomal, found in Trypanosoma brucei brucei.